The primary structure comprises 415 residues: Transcription termination factor Rho (415 aa).

A Rho RNA-BD domain is found at 52 to 119; the sequence is ADIASGVLDI…TDVVRVNGRT (68 aa). Residues 161–166, 173–178, and Arg-204 each bind ATP; these read GKGQRG and KTGKTV.

This sequence belongs to the Rho family. In terms of assembly, homohexamer. The homohexamer assembles into an open ring structure.

Functionally, facilitates transcription termination by a mechanism that involves Rho binding to the nascent RNA, activation of Rho's RNA-dependent ATPase activity, and release of the mRNA from the DNA template. The polypeptide is Transcription termination factor Rho (Streptomyces coelicolor (strain ATCC BAA-471 / A3(2) / M145)).